A 570-amino-acid chain; its full sequence is MFS-type transporter ptmT (570 aa).

A compositionally biased stretch (polar residues) spans M1–T11. A disordered region spans residues M1–Q34. 14 consecutive transmembrane segments (helical) span residues G50 to L70, W94 to Y114, W121 to P141, A151 to I171, A182 to F202, W210 to M230, G247 to L267, N278 to I298, I323 to F343, I356 to I376, V379 to L399, I413 to V433, V445 to A465, and V517 to I537. The N-linked (GlcNAc...) asparagine glycan is linked to N541. Residues P550–T570 form a disordered region. The span at G561–T570 shows a compositional bias: basic and acidic residues.

This sequence belongs to the major facilitator superfamily. TCR/Tet family.

It localises to the cell membrane. MFS-type transporter; part of the gene cluster that mediates the biosynthesis of the indole diterpenes penitrems. May be involved in the efflux of penitrems. The polypeptide is MFS-type transporter ptmT (Penicillium ochrochloron).